Consider the following 569-residue polypeptide: Santalene synthase (569 aa).

(2E)-geranyl diphosphate-binding residues include Arg-284, Asp-321, Asp-325, and Arg-460. The Mg(2+) site is built by Asp-321 and Asp-325. Residues 321-325 (DDAYD) carry the DDXXD motif motif. Residues Asn-463, Thr-467, and Glu-471 each contribute to the Mg(2+) site.

Belongs to the terpene synthase family. Tpsb subfamily. The cofactor is Mg(2+). Mn(2+) is required as a cofactor.

The enzyme catalyses (2E,6E)-farnesyl diphosphate = (1S,5S,6R)-alpha-bergamotene + diphosphate. It carries out the reaction (2E,6E)-farnesyl diphosphate = (+)-alpha-santalene + diphosphate. The catalysed reaction is (2E,6E)-farnesyl diphosphate = (-)-beta-santalene + diphosphate. Catalyzes a mixture of sesquiterpenoids from (2E,6E)-farnesyl diphosphate in fragrance biosynthesis. Catalyzes the formation of alpha-santalene, beta-santalene, epi-beta-santalene and exo-alpha-bergamotene, as well as traces of alpha-farnesene and beta-farnesene. The sequence is that of Santalene synthase from Santalum austrocaledonicum (Sandalwood).